We begin with the raw amino-acid sequence, 467 residues long: ATP-dependent protease ATPase subunit HslU (467 aa).

ATP contacts are provided by residues V22 and 64 to 69 (GVGKTE). Residues 149-192 (QTNNPLESLFGGAIPNFGQNNEDEEEPPTEEIKTKRSEIKRQLE) form a disordered region. Positions 178-192 (EEIKTKRSEIKRQLE) are enriched in basic and acidic residues. ATP is bound by residues D280, E345, and R417.

Belongs to the ClpX chaperone family. HslU subfamily. A double ring-shaped homohexamer of HslV is capped on each side by a ring-shaped HslU homohexamer. The assembly of the HslU/HslV complex is dependent on binding of ATP.

The protein resides in the cytoplasm. Its function is as follows. ATPase subunit of a proteasome-like degradation complex; this subunit has chaperone activity. The binding of ATP and its subsequent hydrolysis by HslU are essential for unfolding of protein substrates subsequently hydrolyzed by HslV. HslU recognizes the N-terminal part of its protein substrates and unfolds these before they are guided to HslV for hydrolysis. The sequence is that of ATP-dependent protease ATPase subunit HslU from Staphylococcus aureus (strain MW2).